The sequence spans 60 residues: Temporin-MT5 (60 aa).

A signal peptide spans 1 to 22 (MFTLKKPLLLLFFLATINLSLC). Residues 23–44 (EQERNAEEERRDEPDERNAEVE) constitute a propeptide, removed in mature form. Phenylalanine amide is present on Phe58.

It belongs to the frog skin active peptide (FSAP) family. Temporin subfamily. As to expression, expressed by the skin glands.

The protein localises to the secreted. In terms of biological role, antimicrobial peptide. This chain is Temporin-MT5, found in Amolops mantzorum (Sichuan torrent frog).